The primary structure comprises 103 residues: Probable protease inhibitor Egf0.4a (103 aa).

Residues 1 to 22 (MMSEKFALVLLVACIAFIGIET) form the signal peptide. The TIL domain occupies 35–87 (CGENEAYDSMRRGCEKRCDDHNPTFCFKFTTVCWCEKGYVRDKSDTCIKVEDC).

Belongs to the polydnaviridae EGF-like motif protein family.

The polypeptide is Probable protease inhibitor Egf0.4a (O4) (Microplitis demolitor (Parasitoid wasp)).